Reading from the N-terminus, the 364-residue chain is Ribosomal RNA large subunit methyltransferase M (364 aa).

Residues serine 194, cysteine 227–glycine 230, aspartate 246, aspartate 266, and aspartate 284 each bind S-adenosyl-L-methionine. The Proton acceptor role is filled by lysine 313.

Belongs to the class I-like SAM-binding methyltransferase superfamily. RNA methyltransferase RlmE family. RlmM subfamily. As to quaternary structure, monomer.

The protein localises to the cytoplasm. It carries out the reaction cytidine(2498) in 23S rRNA + S-adenosyl-L-methionine = 2'-O-methylcytidine(2498) in 23S rRNA + S-adenosyl-L-homocysteine + H(+). Functionally, catalyzes the 2'-O-methylation at nucleotide C2498 in 23S rRNA. The protein is Ribosomal RNA large subunit methyltransferase M of Actinobacillus succinogenes (strain ATCC 55618 / DSM 22257 / CCUG 43843 / 130Z).